A 360-amino-acid polypeptide reads, in one-letter code: MNACLVGIWLWLPLLFTWLSPEVSSSWWYMRATSGSSRVMCDNVPGLVSHQRQLCHRHPDVMRAIGLGVTEWTMECQHQFRQHRWNCNTLDRDHSLFGRVLLRSSRESAFVYAISSAGVVFAITRACSQGELKSCSCDPKKKGTAKDNKGTFDWGGCSDNIDYGIKFARAFVDAKERKGKDARALMNLHNNRAGRKAVKRFLKQECKCHGVSGSCTLRTCWLAMADFRKTGNYLWRKYNGAIQVVMNQDGTGFTVANKRFKKPTKNDLVYFENSPDYCIRDRDAGSLGTAGRVCNLTSRGMDSCEVMCCGRGYDTSHITRKTKCECKFHWCCAVRCQDCVEALDVHTCKAPKSPDWAAPT.

The first 25 residues, 1-25 (MNACLVGIWLWLPLLFTWLSPEVSS), serve as a signal peptide directing secretion. Cystine bridges form between cysteine 76/cysteine 87, cysteine 127/cysteine 135, cysteine 137/cysteine 157, cysteine 206/cysteine 220, cysteine 208/cysteine 215, cysteine 278/cysteine 309, cysteine 294/cysteine 304, cysteine 308/cysteine 348, cysteine 324/cysteine 339, cysteine 326/cysteine 336, and cysteine 331/cysteine 332. A lipid anchor (O-palmitoleoyl serine; by PORCN) is attached at serine 212. N-linked (GlcNAc...) asparagine glycosylation is present at asparagine 295.

The protein belongs to the Wnt family. Post-translationally, palmitoleoylation is required for efficient binding to frizzled receptors. Depalmitoleoylation leads to Wnt signaling pathway inhibition.

Its subcellular location is the secreted. The protein localises to the extracellular space. It localises to the extracellular matrix. Ligand for members of the frizzled family of seven transmembrane receptors. Probable developmental protein. May be a signaling molecule which affects the development of discrete regions of tissues. Is likely to signal over only few cell diameters. This chain is Protein Wnt-2 (WNT2), found in Muntiacus muntjak (Barking deer).